The chain runs to 449 residues: Adenylosuccinate synthetase (449 aa).

GTP is bound by residues 12–18 and 40–42; these read GDEGKGK and GHT. Aspartate 13 functions as the Proton acceptor in the catalytic mechanism. Residues aspartate 13 and glycine 40 each coordinate Mg(2+). IMP-binding positions include 13–16, 38–41, threonine 128, arginine 142, glutamine 223, threonine 238, and arginine 302; these read DEGK and NAGH. Histidine 41 acts as the Proton donor in catalysis. 298–304 lines the substrate pocket; the sequence is TTTGRRR. GTP is bound by residues arginine 304, 330–332, and 412–414; these read KLD and SLG.

Belongs to the adenylosuccinate synthetase family. As to quaternary structure, homodimer. Requires Mg(2+) as cofactor.

The protein localises to the cytoplasm. The enzyme catalyses IMP + L-aspartate + GTP = N(6)-(1,2-dicarboxyethyl)-AMP + GDP + phosphate + 2 H(+). The protein operates within purine metabolism; AMP biosynthesis via de novo pathway; AMP from IMP: step 1/2. Plays an important role in the de novo pathway of purine nucleotide biosynthesis. Catalyzes the first committed step in the biosynthesis of AMP from IMP. This is Adenylosuccinate synthetase from Gloeothece citriformis (strain PCC 7424) (Cyanothece sp. (strain PCC 7424)).